Consider the following 436-residue polypeptide: UPF0597 protein YhaM (436 aa).

Belongs to the UPF0597 family.

This is UPF0597 protein YhaM from Salmonella gallinarum (strain 287/91 / NCTC 13346).